Reading from the N-terminus, the 1703-residue chain is Ferlin 2 (1703 aa).

C2 domains are found at residues 18–141 (IRKL…KTWL) and 207–332 (KQPV…FRWF). 3 disordered regions span residues 913–937 (NQFN…FDDN), 970–1025 (NLDK…TSST), and 1194–1228 (KNKS…QKLG). Residues 916 to 928 (NDDDEGDNEDEQD) are compositionally biased toward acidic residues. The span at 979–991 (QPQSLKNLQNLDS) shows a compositional bias: polar residues. The span at 993–1009 (SKADQKSQFDLKSESKS) shows a compositional bias: basic and acidic residues. Residues 1198 to 1209 (NRSSMSLSMRSS) show a composition bias toward low complexity. Positions 1466–1595 (VARIIPPSTI…LKKLKEGIVF (130 aa)) constitute a C2 3 domain. The segment at 1628-1651 (AAESDPVGEGQNEPNKDPILEKPK) is disordered. Basic and acidic residues predominate over residues 1641–1651 (PNKDPILEKPK). A helical membrane pass occupies residues 1681–1701 (FAGIFVSIVTMMILFVKPGIL).

It belongs to the ferlin family.

It localises to the membrane. Its function is as follows. Regulates mucocyst exocytosis. The protein is Ferlin 2 of Tetrahymena thermophila (strain SB210).